A 243-amino-acid chain; its full sequence is 5'-methylthioadenosine/S-adenosylhomocysteine nucleosidase (243 aa).

The Proton acceptor role is filled by glutamate 12. Substrate-binding positions include glycine 78, methionine 158, and 179-180; that span reads ME. The active-site Proton donor is aspartate 203.

The protein belongs to the PNP/UDP phosphorylase family. MtnN subfamily.

The enzyme catalyses S-adenosyl-L-homocysteine + H2O = S-(5-deoxy-D-ribos-5-yl)-L-homocysteine + adenine. It catalyses the reaction S-methyl-5'-thioadenosine + H2O = 5-(methylsulfanyl)-D-ribose + adenine. The catalysed reaction is 5'-deoxyadenosine + H2O = 5-deoxy-D-ribose + adenine. It functions in the pathway amino-acid biosynthesis; L-methionine biosynthesis via salvage pathway; S-methyl-5-thio-alpha-D-ribose 1-phosphate from S-methyl-5'-thioadenosine (hydrolase route): step 1/2. Catalyzes the irreversible cleavage of the glycosidic bond in both 5'-methylthioadenosine (MTA) and S-adenosylhomocysteine (SAH/AdoHcy) to adenine and the corresponding thioribose, 5'-methylthioribose and S-ribosylhomocysteine, respectively. Also cleaves 5'-deoxyadenosine, a toxic by-product of radical S-adenosylmethionine (SAM) enzymes, into 5-deoxyribose and adenine. This chain is 5'-methylthioadenosine/S-adenosylhomocysteine nucleosidase, found in Colwellia psychrerythraea (strain 34H / ATCC BAA-681) (Vibrio psychroerythus).